The following is a 191-amino-acid chain: 7-methyl-GTP pyrophosphatase (191 aa).

The Proton acceptor role is filled by Asp70.

Belongs to the Maf family. YceF subfamily. It depends on a divalent metal cation as a cofactor.

The protein localises to the cytoplasm. The enzyme catalyses N(7)-methyl-GTP + H2O = N(7)-methyl-GMP + diphosphate + H(+). Nucleoside triphosphate pyrophosphatase that hydrolyzes 7-methyl-GTP (m(7)GTP). May have a dual role in cell division arrest and in preventing the incorporation of modified nucleotides into cellular nucleic acids. This Xanthomonas oryzae pv. oryzae (strain KACC10331 / KXO85) protein is 7-methyl-GTP pyrophosphatase.